The sequence spans 110 residues: UPF0060 membrane protein Psyr_3752 (110 aa).

4 consecutive transmembrane segments (helical) span residues 5-25, 28-48, 59-79, and 84-104; these read LWFFLAALFEIFGCYAFWLWL, GKSALWVIPALVSLTVFALLL, AYAAYGGIYIVASIAWLGLVE, and LGTDWLGLAFCVIGATIILLG.

It belongs to the UPF0060 family.

Its subcellular location is the cell inner membrane. This Pseudomonas syringae pv. syringae (strain B728a) protein is UPF0060 membrane protein Psyr_3752.